Here is a 446-residue protein sequence, read N- to C-terminus: Dual specificity mitogen-activated protein kinase kinase 2 (446 aa).

Low complexity predominate over residues 27-42 (SSGSSAGLGFQGQSQQ). Positions 27–51 (SSGSSAGLGFQGQSQQHSTVNSMQG) are disordered. A Protein kinase domain is found at 149–414 (LKDLGEIGRG…YKELLKHPFI (266 aa)). Residues 155–163 (IGRGAYGSV) and K178 contribute to the ATP site. The active-site Proton acceptor is the D276. S304 is subject to Phosphoserine; by RAF. T308 carries the post-translational modification Phosphothreonine; by RAF.

The protein belongs to the protein kinase superfamily. STE Ser/Thr protein kinase family. MAP kinase kinase subfamily. MAPKK is itself dependent on Ser/Thr phosphorylation for activity catalyzed by MAP kinase kinase kinases. Expressed abundantly in the adult brain and muscle.

The catalysed reaction is L-seryl-[protein] + ATP = O-phospho-L-seryl-[protein] + ADP + H(+). It carries out the reaction L-threonyl-[protein] + ATP = O-phospho-L-threonyl-[protein] + ADP + H(+). The enzyme catalyses L-tyrosyl-[protein] + ATP = O-phospho-L-tyrosyl-[protein] + ADP + H(+). Its function is as follows. Catalyzes the concomitant phosphorylation of a threonine and a tyrosine residue in a Thr-Glu-Tyr sequence located in MAP kinases. This is Dual specificity mitogen-activated protein kinase kinase 2 (map2k2) from Xenopus laevis (African clawed frog).